A 217-amino-acid chain; its full sequence is Somatotropin (217 aa).

The first 27 residues, 1 to 27, serve as a signal peptide directing secretion; that stretch reads MMAAGPRTSLLLAFALLCLPWTQMVGA. Zn(2+) is bound at residue His-46. The cysteines at positions 79 and 190 are disulfide-linked. Ser-132 is subject to Phosphoserine. Glu-199 contacts Zn(2+). Cysteines 207 and 215 form a disulfide.

The protein belongs to the somatotropin/prolactin family.

It localises to the secreted. Functionally, plays an important role in growth control. Its major role in stimulating body growth is to stimulate the liver and other tissues to secrete IGF1. It stimulates both the differentiation and proliferation of myoblasts. It also stimulates amino acid uptake and protein synthesis in muscle and other tissues. In Giraffa camelopardalis (Giraffe), this protein is Somatotropin (GH1).